Here is a 253-residue protein sequence, read N- to C-terminus: Homeotic protein ultrabithorax (253 aa).

Over residues 125–141 (GNTSNGSNAPNAANGQN) the composition is skewed to low complexity. A disordered region spans residues 125–193 (GNTSNGSNAP…GNGTAGGVPQ (69 aa)). Positions 176 to 189 (RGGGSAGGGNGTAG) are enriched in gly residues. An Antp-type hexapeptide motif is present at residues 237–242 (FYPWMA).

Belongs to the Antp homeobox family.

The protein localises to the nucleus. Its function is as follows. Sequence-specific transcription factor which is part of a developmental regulatory system that provides cells with specific positional identities on the anterior-posterior axis. Binds the consensus region 5'-TTAAT[GT][GA]-3'. This homeotic protein controls development of the cells in the posterior thoracic and first abdominal segments. It activates the synthesis of the decapentaplegic (DPP) growth factor. The protein is Homeotic protein ultrabithorax (Ubx) of Drosophila funebris (Fruit fly).